A 630-amino-acid chain; its full sequence is MVLTRRAALLLCPWVIQLVIKRTLAGDILPNEGKKEKDDVHKIISELRFLQKVETILESSNMSVSDVEADANAYNPDRDAPKEELQKLQDQQETPSKQPNNLRNSPQKRAEKKESPGKNKKSLRLIVSENHATSPSFFEESLLQEDVVSFIQSKGKLSNLKNLKSMIIDLNSDMTDEELAEYISLLERKGALIESDKLVGADDVSLASVKDAVRRGESSVNWGKLRSTMLEVPSGESPPSHAASSGSPFDDDDDLLSEAALHREEAHLAGSKTTKGYKFNDEYRNLQWGLDLARLDETQDLINANRVSVTKICVIDSGIDYNHPDLRNNIDVNVKELHGRKGVDDDSNGVVDDVYGANFVNNSGDPMDDNYHGTHVSGIISAVGNNGIGIVGVDGHSKLVICKALDQHKLGRLGDMFKCIDYCISRQAHMINGSFSFDEYSNIFNASVEHLRSLGILFFVSASNCAHDKLSKPDIAKCDLAVNHRYPPILSKTHNNVIAVANLKRDLDESYSLSVNSFYSNIYCQLAAPGTNIYSTTPMNNYRKLNGTSMASPHVAAIASIVRSINPNLTYLQIVEILRNAIVKLPSLTERVSWGGYVDILRAVNLAIDSKAAPYIKSHSWFRWKQGSRR.

The signal sequence occupies residues 1-25 (MVLTRRAALLLCPWVIQLVIKRTLA). Positions 26-202 (GDILPNEGKK…IESDKLVGAD (177 aa)) are cleaved as a propeptide — inhibition peptide. The interval 72-125 (NAYNPDRDAPKEELQKLQDQQETPSKQPNNLRNSPQKRAEKKESPGKNKKSLRL) is disordered. A compositionally biased stretch (basic and acidic residues) spans 76–87 (PDRDAPKEELQK). Residues 94-107 (TPSKQPNNLRNSPQ) are compositionally biased toward polar residues. Residues 108 to 117 (KRAEKKESPG) show a composition bias toward basic and acidic residues. Ca(2+) is bound by residues Glu129, Asn130, Thr133, Pro135, and Gly190. Positions 230 to 254 (LEVPSGESPPSHAASSGSPFDDDDD) are disordered. Residues 233–248 (PSGESPPSHAASSGSP) are compositionally biased toward low complexity. Ca(2+) is bound at residue Asp281. Positions 287-604 (QWGLDLARLD…GGYVDILRAV (318 aa)) constitute a Peptidase S8 domain. Cystine bridges form between Cys313-Cys423, Cys402-Cys419, and Cys465-Cys478. Asp316 acts as the Charge relay system in catalysis. Ca(2+) is bound by residues Asp325, Glu336, Arg340, Val343, Asp344, Asp345, Asp346, Asn348, Val350, Asp352, and Asp353. The active-site Charge relay system is the His372. Ca(2+)-binding residues include Val383, Asn386, Ile388, and Ile390. Asn546 carries an N-linked (GlcNAc...) asparagine glycan. Ser549 serves as the catalytic Charge relay system.

This sequence belongs to the peptidase S8 family. In terms of assembly, heterodimer between p54 form and prodomain p31; the interaction inhibits p54 catalytic activity. Heterodimer p31-p54 is monomeric at basic pH and dimeric at acidic pH; dimerization is driven by the N-terminal prodomain (p31). Ca(2+) is required as a cofactor. The prodomain (p31) is cleaved, probably by autocatalysis, and remains non-covalently associated with the p54 form as an inhibitor. p54 is further cleaved into the p45/p47 forms. Post-translationally, the relevance of the N-glycosylation is not clear. In an insect expression system, SUB1 glycosylation appears to affect its processing into the active mature form suggesting that SUB1 may not be N-glycosylated in parasites.

Its subcellular location is the secreted. It is found in the parasitophorous vacuole lumen. The enzyme catalyses Hydrolysis of proteins with broad specificity for peptide bonds, and a preference for a large uncharged residue in P1. Hydrolyzes peptide amides.. Inhibited by peptidic alpha-ketoamide inhibitors. Inhibited by the alpha-ketoamide nonapeptide JMV5126 (isocaproyl-KITAQ(CO)DDEE-NH2). Inhibited by the alpha-ketoamide peptide MAM-117. Functionally, serine protease which plays an essential role in merozoite invasion of and egress from host erythrocytes by processing and activating various merozoite surface and parasitophorous vacuole proteins. The sequence is that of Subtilisin-like protease 1 from Plasmodium vivax.